Here is a 165-residue protein sequence, read N- to C-terminus: Sec-independent protein translocase protein TatB (165 aa).

A helical transmembrane segment spans residues 1–21; it reads MFDVSFTELIVIGVVALIVLG. Polar residues predominate over residues 67-84; the sequence is DSTAQDVNQSLRSATDSL. Positions 67-165 are disordered; it reads DSTAQDVNQS…PKSPSTGNAT (99 aa). The segment covering 127 to 159 has biased composition (low complexity); sequence KLPGTPATLPATAAAEPTPAAPAASQAEAPKSP.

Belongs to the TatB family. As to quaternary structure, the Tat system comprises two distinct complexes: a TatABC complex, containing multiple copies of TatA, TatB and TatC subunits, and a separate TatA complex, containing only TatA subunits. Substrates initially bind to the TatABC complex, which probably triggers association of the separate TatA complex to form the active translocon.

Its subcellular location is the cell inner membrane. In terms of biological role, part of the twin-arginine translocation (Tat) system that transports large folded proteins containing a characteristic twin-arginine motif in their signal peptide across membranes. Together with TatC, TatB is part of a receptor directly interacting with Tat signal peptides. TatB may form an oligomeric binding site that transiently accommodates folded Tat precursor proteins before their translocation. This chain is Sec-independent protein translocase protein TatB, found in Bordetella avium (strain 197N).